A 230-amino-acid chain; its full sequence is uncharacterized protein (230 aa).

6 consecutive transmembrane segments (helical) span residues 4–24 (ACIAIIIILLTVAAYLAMVKL), 30–50 (LPFLIPVLTTTILIVAALMMF), 67–87 (LLGPAVVALAYPLYKQWHIIV), 91–111 (VPILGGVLVGLCMGMISGLIF), 148–168 (MTVVFVMIAGFSGVILGPLFL), and 210–230 (MTLCAVLGSFFGPLVVWLFHI).

Belongs to the YohK (E.coli)/YwbG (IPA-22R) (B.subtilis) family.

It is found in the cell membrane. This is an uncharacterized protein from Bacillus subtilis (strain 168).